Reading from the N-terminus, the 582-residue chain is PX domain-containing protein kinase-like protein (582 aa).

The region spanning 14-126 is the PX domain; it reads LDDTVPLTAA…KFLDPNNYSA (113 aa). Residues 88–481 enclose the Protein kinase domain; that stretch reads FIAERQRGLQ…VENSEEQPVK (394 aa). Positions 433-550 are disordered; it reads EQKQIHQHRR…APFLPQPVNG (118 aa). Basic residues-rich tracts occupy residues 437 to 448 and 457 to 469; these read IHQHRRLTRAQS and KRRKILARKKSKR. The segment covering 483–514 has biased composition (low complexity); it reads SNSNNSAGSGASSPLTSPSSPTPPSTAGLSSA. Pro residues predominate over residues 515-531; sequence LPPPPPPPPPPPPPAGP. The WH2 domain maps to 548 to 567; sequence VNGVNRGALLSSIQNFQKGT.

This sequence belongs to the protein kinase superfamily. As to expression, isoform 1 is present in all tissues examined. Isoform 2 is found in all tissues except skeletal muscle and very low levels in spleen. Both isoforms are widely expressed throughout the nervous system however levels of isoform 2 are higher in purified hippocampal and cortical neurons whereas glial cells express more isoform 1 than isoform 2.

It localises to the cytoplasm. The protein localises to the cell membrane. Its function is as follows. Binds to and modulates brain Na,K-ATPase subunits ATP1B1 and ATP1B3 and may thereby participate in the regulation of electrical excitability and synaptic transmission. May not display kinase activity. The chain is PX domain-containing protein kinase-like protein from Mus musculus (Mouse).